The sequence spans 232 residues: Golgi SNAP receptor complex member 1 (232 aa).

Residues Met-1–Asp-211 are Cytoplasmic-facing. Coiled coils occupy residues Tyr-6–Lys-23 and Gly-52–Leu-80. Residues Ser-212–Asn-232 traverse the membrane as a helical; Anchor for type IV membrane protein segment.

This sequence belongs to the GOSR1 family. Component of several multiprotein Golgi SNARE complexes.

The protein localises to the golgi apparatus membrane. Its function is as follows. Involved in transport from the ER to the Golgi apparatus as well as in intra-Golgi transport. It belongs to a super-family of proteins called t-SNAREs or soluble NSF (N-ethylmaleimide-sensitive factor) attachment protein receptor. This is Golgi SNAP receptor complex member 1 (Gos28) from Drosophila melanogaster (Fruit fly).